The sequence spans 455 residues: MFS-type transporter SLC18B1 (455 aa).

Met-1 bears the N-acetylmethionine mark. The interval 1-26 (MDTAGPPAPAGTEGDGPGGSTGETSR) is disordered. The Cytoplasmic portion of the chain corresponds to 1 to 32 (MDTAGPPAPAGTEGDGPGGSTGETSRRLSKEQ). Ser-20 is subject to Phosphoserine. Residues 33–53 (IFVLVSAASMNLGCMMTYSIL) traverse the membrane as a helical segment. The Extracellular portion of the chain corresponds to 54–69 (GPFFPKEAEKKGASNT). Residues 70–90 (TIGMIFGCYALFELLASLVFG) form a helical membrane-spanning segment. Over 91-99 (KYLVHIGAK) the chain is Cytoplasmic. Residues 100–120 (FMFIAGMFVSGGVTILFGVLD) traverse the membrane as a helical segment. At 121–126 (QLPEGP) the chain is on the extracellular side. A helical transmembrane segment spans residues 127 to 147 (IFIAMCFLVRIVDAIGFGAAI). Over 148 to 166 (TASSSILAKAFPNNVATVM) the chain is Cytoplasmic. Residues 167 to 187 (GSLEVFSGLGLVAGPPLGGLL) form a helical membrane-spanning segment. Over 188–194 (YQSFGYE) the chain is Extracellular. The chain crosses the membrane as a helical span at residues 195-215 (VPFIFLGCIVLLMIPLNLCIL). Over 216–232 (PSYESDAGKQSFWKLVT) the chain is Cytoplasmic. Residues 233-253 (LPKIGLIAFVIISLSSCFGFL) traverse the membrane as a helical segment. The Extracellular portion of the chain corresponds to 254–271 (DPTLSLFVMKKFSLSTGY). A helical membrane pass occupies residues 272 to 292 (VGLVFLGLSLSYAISSPLFGL). At 293 to 303 (LSDKMPNLRKW) the chain is on the cytoplasmic side. The helical transmembrane segment at 304-324 (FLVFGNLITAGCYMLLGPIPL) threads the bilayer. Topologically, residues 325-330 (LHIKSQ) are extracellular. A helical transmembrane segment spans residues 331 to 351 (LWLLVLVLVINGVSAGMSIIP). Residues 352-376 (TFPEMLSCAYANGFEDGISTLGLVS) lie on the Cytoplasmic side of the membrane. The helical transmembrane segment at 377–397 (GLFGAMWSVGAFMGPILGGFL) threads the bilayer. At 398–406 (CEKIGFEWA) the chain is on the extracellular side. Residues 407–427 (AAIQGLWTLLSGVAMALFYLW) traverse the membrane as a helical segment. Over 428-455 (EDSTMRRSKAQNILGTEEEQAALLPNDT) the chain is Cytoplasmic.

In terms of tissue distribution, expressed in brain structures, particularly in hippocampus, cortex, and cerebellum (at protein level). Expressed in astrocytes and hippocampal neurons (at protein level). Expressed in peritoneal mast cells.

The protein localises to the cytoplasmic vesicle. It is found in the secretory vesicle membrane. The protein resides in the secretory vesicle. Its subcellular location is the synaptic vesicle membrane. It catalyses the reaction spermine(in) + n H(+)(out) = spermine(out) + n H(+)(in). It carries out the reaction spermidine(in) + n H(+)(out) = spermidine(out) + n H(+)(in). The enzyme catalyses serotonin(in) + n H(+)(out) = serotonin(out) + n H(+)(in). In terms of biological role, proton-coupled polyamine antiporter involved in the translocation of polyamines from cytosol into secretory vesicles prior to their release via exocytosis. Uses the electrochemical proton gradient generated by a V-type proton-pumping ATPase to couple the efflux of protons with the uptake of a polyamine molecule. Facilitates vesicular storage of spermine and spermidine in astrocytes with an impact on glutamatergic neuronal transmission and memory formation. Upon antigen stimulation, regulates polyamine accumulation and release in mast cell secretory granules, which in turn potentiates mast cell degranulation and histamine secretion. This Rattus norvegicus (Rat) protein is MFS-type transporter SLC18B1.